Reading from the N-terminus, the 351-residue chain is Large ribosomal subunit protein uL3 (351 aa).

Disordered regions lie at residues 1–31 (MGHR…TPRT) and 246–271 (KGSR…GQLG).

This sequence belongs to the universal ribosomal protein uL3 family. As to quaternary structure, part of the 50S ribosomal subunit. Forms a cluster with proteins L14 and L24e.

One of the primary rRNA binding proteins, it binds directly near the 3'-end of the 23S rRNA, where it nucleates assembly of the 50S subunit. The protein is Large ribosomal subunit protein uL3 of Saccharolobus islandicus (strain M.16.27) (Sulfolobus islandicus).